The sequence spans 577 residues: Alpha-1,2-mannosyltransferase alg9 (577 aa).

The signal sequence occupies residues 1 to 29; it reads MPSKAPRKSLSVSFVWTFSILAVLRLTSA. At 30–68 the chain is on the extracellular side; it reads SFRVIDDCDEVYNYWEPLHYLLYGYGLQTWEYSPEYAIR. A helical membrane pass occupies residues 69-89; that stretch reads SWFYIALHAVPGFLARGLGLS. The Cytoplasmic portion of the chain corresponds to 90 to 95; that stretch reads RLHVFY. The helical transmembrane segment at 96 to 116 threads the bilayer; the sequence is FIRGVLACFSAFCETNLILAV. The Extracellular segment spans residues 117-136; it reads ARNFNRAVALHLTSVLFVNS. Residues 137–159 form a helical membrane-spanning segment; the sequence is GMWSASTSFLPSSFAMNMVTLAL. Residues 160 to 176 lie on the Cytoplasmic side of the membrane; it reads SAQLSPPSTKRTVKVVS. Residues 177–197 traverse the membrane as a helical segment; it reads FITIGAVIGWPFSAALSIPFI. At 198–217 the chain is on the extracellular side; the sequence is LLELVDLKGRFRHLFCRWFK. Residues 218-238 form a helical membrane-spanning segment; sequence AIFVALLITGICITVDSLFYH. The Cytoplasmic segment spans residues 239–280; sequence RIQFVAWNIVKYNVLAKDGRGPDIYGTEPWWYYFANLSLQHN. The helical transmembrane segment at 281 to 301 threads the bilayer; it reads IVLWFAMACGPLVLLAAFTNW. The Extracellular segment spans residues 302 to 305; the sequence is INLD. Residues 306–326 traverse the membrane as a helical segment; that stretch reads SFLDLSSVISPFYIWLFIFII. The Cytoplasmic portion of the chain corresponds to 327-333; the sequence is QPHKEER. A helical transmembrane segment spans residues 334–354; the sequence is FMYPIYPVLCLAAAIGLDMSL. The Extracellular portion of the chain corresponds to 355–375; it reads KLMIQILSSINETVRSKFPVR. The chain crosses the membrane as a helical span at residues 376–396; sequence FVVLCVYAIIGCLSIARILAI. The Cytoplasmic portion of the chain corresponds to 397-577; the sequence is QNYNAPMIIY…NLRRASKQQA (181 aa).

This sequence belongs to the glycosyltransferase 22 family.

It is found in the endoplasmic reticulum membrane. The enzyme catalyses an alpha-D-Man-(1-&gt;2)-alpha-D-Man-(1-&gt;2)-alpha-D-Man-(1-&gt;3)-[alpha-D-Man-(1-&gt;3)-alpha-D-Man-(1-&gt;6)]-beta-D-Man-(1-&gt;4)-beta-D-GlcNAc-(1-&gt;4)-alpha-D-GlcNAc-diphospho-di-trans,poly-cis-dolichol + a di-trans,poly-cis-dolichyl beta-D-mannosyl phosphate = an alpha-D-Man-(1-&gt;2)-alpha-D-Man-(1-&gt;2)-alpha-D-Man-(1-&gt;3)-[alpha-D-Man-(1-&gt;2)-alpha-D-Man-(1-&gt;3)-alpha-D-Man-(1-&gt;6)]-beta-D-Man-(1-&gt;4)-beta-D-GlcNAc-(1-&gt;4)-alpha-D-GlcNAc-diphospho-di-trans,poly-cis-dolichol + a di-trans,poly-cis-dolichyl phosphate + H(+). The catalysed reaction is an alpha-D-Man-(1-&gt;2)-alpha-D-Man-(1-&gt;2)-alpha-D-Man-(1-&gt;3)-[alpha-D-Man-(1-&gt;2)-alpha-D-Man-(1-&gt;3)-[alpha-D-Man-(1-&gt;6)]-alpha-D-Man-(1-&gt;6)]-beta-D-Man-(1-&gt;4)-beta-D-GlcNAc-(1-&gt;4)-alpha-D-GlcNAc-diphospho-di-trans,poly-cis-dolichol + a di-trans,poly-cis-dolichyl beta-D-mannosyl phosphate = an alpha-D-Man-(1-&gt;2)-alpha-D-Man-(1-&gt;2)-alpha-D-Man-(1-&gt;3)-[alpha-D-Man-(1-&gt;2)-alpha-D-Man-(1-&gt;3)-[alpha-D-Man-(1-&gt;2)-alpha-D-Man-(1-&gt;6)]-alpha-D-Man-(1-&gt;6)]-beta-D-Man-(1-&gt;4)-beta-D-GlcNAc-(1-&gt;4)-alpha-D-GlcNAc-diphospho-di-trans,poly-cis-dolichol + a di-trans,poly-cis-dolichyl phosphate + H(+). Its pathway is protein modification; protein glycosylation. Its function is as follows. Catalyzes the transfer of mannose from Dol-P-Man to lipid-linked oligosaccharides. This Schizosaccharomyces pombe (strain 972 / ATCC 24843) (Fission yeast) protein is Alpha-1,2-mannosyltransferase alg9 (alg9).